A 453-amino-acid chain; its full sequence is Phosphoglucosamine mutase (453 aa).

Ser-109 serves as the catalytic Phosphoserine intermediate. Mg(2+) contacts are provided by Ser-109, Asp-246, Asp-248, and Asp-250. Ser-109 carries the phosphoserine modification.

It belongs to the phosphohexose mutase family. The cofactor is Mg(2+). Post-translationally, activated by phosphorylation.

It catalyses the reaction alpha-D-glucosamine 1-phosphate = D-glucosamine 6-phosphate. In terms of biological role, catalyzes the conversion of glucosamine-6-phosphate to glucosamine-1-phosphate. The polypeptide is Phosphoglucosamine mutase (Leifsonia xyli subsp. xyli (strain CTCB07)).